Reading from the N-terminus, the 368-residue chain is Agmatine deiminase (368 aa).

The active-site Amidino-cysteine intermediate is the cysteine 357.

Belongs to the agmatine deiminase family. Homodimer.

The enzyme catalyses agmatine + H2O = N-carbamoylputrescine + NH4(+). The protein operates within amine and polyamine biosynthesis; putrescine biosynthesis via agmatine pathway; N-carbamoylputrescine from agmatine: step 1/1. Its function is as follows. Mediates the hydrolysis of agmatine into N-carbamoylputrescine in the arginine decarboxylase (ADC) pathway of putrescine biosynthesis, a basic polyamine. The polypeptide is Agmatine deiminase (Pseudomonas syringae pv. tomato (strain ATCC BAA-871 / DC3000)).